We begin with the raw amino-acid sequence, 295 residues long: Nicotinate-nucleotide pyrophosphorylase [carboxylating] (295 aa).

Substrate contacts are provided by residues arginine 107, 142-144, arginine 166, lysine 176, glutamate 206, aspartate 227, and 256-258; these read TRK and SGG.

This sequence belongs to the NadC/ModD family. As to quaternary structure, hexamer formed by 3 homodimers.

It is found in the cytoplasm. Its subcellular location is the nucleus. The catalysed reaction is nicotinate beta-D-ribonucleotide + CO2 + diphosphate = quinolinate + 5-phospho-alpha-D-ribose 1-diphosphate + 2 H(+). It functions in the pathway cofactor biosynthesis; NAD(+) biosynthesis; nicotinate D-ribonucleotide from quinolinate: step 1/1. Its function is as follows. Involved in the catabolism of quinolinic acid (QA). The protein is Nicotinate-nucleotide pyrophosphorylase [carboxylating] (BNA6) of Saccharomyces cerevisiae (strain ATCC 204508 / S288c) (Baker's yeast).